We begin with the raw amino-acid sequence, 229 residues long: Large ribosomal subunit protein uL1 (229 aa).

This sequence belongs to the universal ribosomal protein uL1 family. As to quaternary structure, part of the 50S ribosomal subunit.

Binds directly to 23S rRNA. The L1 stalk is quite mobile in the ribosome, and is involved in E site tRNA release. Its function is as follows. Protein L1 is also a translational repressor protein, it controls the translation of the L11 operon by binding to its mRNA. This chain is Large ribosomal subunit protein uL1, found in Actinobacillus pleuropneumoniae serotype 5b (strain L20).